We begin with the raw amino-acid sequence, 367 residues long: Anhydro-N-acetylmuramic acid kinase (367 aa).

Position 13–20 (13–20 (GTSMDGAD)) interacts with ATP.

Belongs to the anhydro-N-acetylmuramic acid kinase family.

The catalysed reaction is 1,6-anhydro-N-acetyl-beta-muramate + ATP + H2O = N-acetyl-D-muramate 6-phosphate + ADP + H(+). The protein operates within amino-sugar metabolism; 1,6-anhydro-N-acetylmuramate degradation. It participates in cell wall biogenesis; peptidoglycan recycling. Catalyzes the specific phosphorylation of 1,6-anhydro-N-acetylmuramic acid (anhMurNAc) with the simultaneous cleavage of the 1,6-anhydro ring, generating MurNAc-6-P. Is required for the utilization of anhMurNAc either imported from the medium or derived from its own cell wall murein, and thus plays a role in cell wall recycling. In Neisseria gonorrhoeae (strain ATCC 700825 / FA 1090), this protein is Anhydro-N-acetylmuramic acid kinase.